Reading from the N-terminus, the 418-residue chain is rRNA methyltransferase 3, mitochondrial (418 aa).

The N-terminal 40 residues, 1 to 40 (MAAPAKGMWCSLGSLLRVVQTRDLNARRWVRALRRSPVRV), are a transit peptide targeting the mitochondrion. The segment at 41 to 90 (LSPSGQVEERKRAPDQQPRKAVPKASSQGQRQKQPLETSPSQTPHTWEEA) is disordered. The segment covering 47-58 (VEERKRAPDQQP) has biased composition (basic and acidic residues). A compositionally biased stretch (polar residues) spans 65-85 (ASSQGQRQKQPLETSPSQTPH). 3 residues coordinate S-adenosyl-L-methionine: glycine 354, isoleucine 378, and leucine 387.

It belongs to the class IV-like SAM-binding methyltransferase superfamily. RNA methyltransferase TrmH family.

It is found in the mitochondrion. It carries out the reaction guanosine(1370) in 16S rRNA + S-adenosyl-L-methionine = 2'-O-methylguanosine(1370) in 16S rRNA + S-adenosyl-L-homocysteine + H(+). In terms of biological role, S-adenosyl-L-methionine-dependent 2'-O-ribose methyltransferase that catalyzes the formation of 2'-O-methylguanosine at position 1370 (Gm1370) in the 16S mitochondrial large subunit ribosomal RNA (mtLSU rRNA), a conserved modification in the peptidyl transferase domain of the mtLSU rRNA. Also required for formation of 2'-O-methyluridine at position 1369 (Um1369) mediated by MRM2. The polypeptide is rRNA methyltransferase 3, mitochondrial (Mus musculus (Mouse)).